Here is a 427-residue protein sequence, read N- to C-terminus: 3-phosphoshikimate 1-carboxyvinyltransferase (427 aa).

Lysine 22, serine 23, and arginine 27 together coordinate 3-phosphoshikimate. Position 22 (lysine 22) interacts with phosphoenolpyruvate. Residues glycine 96 and arginine 124 each contribute to the phosphoenolpyruvate site. Positions 169, 170, 171, 197, 313, 336, and 340 each coordinate 3-phosphoshikimate. Glutamine 171 lines the phosphoenolpyruvate pocket. The active-site Proton acceptor is the aspartate 313. Phosphoenolpyruvate is bound by residues arginine 344, arginine 386, and lysine 411.

It belongs to the EPSP synthase family. Monomer.

Its subcellular location is the cytoplasm. It catalyses the reaction 3-phosphoshikimate + phosphoenolpyruvate = 5-O-(1-carboxyvinyl)-3-phosphoshikimate + phosphate. It functions in the pathway metabolic intermediate biosynthesis; chorismate biosynthesis; chorismate from D-erythrose 4-phosphate and phosphoenolpyruvate: step 6/7. Its function is as follows. Catalyzes the transfer of the enolpyruvyl moiety of phosphoenolpyruvate (PEP) to the 5-hydroxyl of shikimate-3-phosphate (S3P) to produce enolpyruvyl shikimate-3-phosphate and inorganic phosphate. In Klebsiella pneumoniae (strain 342), this protein is 3-phosphoshikimate 1-carboxyvinyltransferase.